We begin with the raw amino-acid sequence, 399 residues long: Argininosuccinate synthase (399 aa).

ATP-binding positions include Ala-8–Ser-16 and Ala-35. Tyr-87 is a binding site for L-citrulline. Gly-117 provides a ligand contact to ATP. The L-aspartate site is built by Thr-119, Asn-123, and Asp-124. L-citrulline is bound at residue Asn-123. L-citrulline contacts are provided by Arg-127, Ser-176, Ser-185, Glu-261, and Tyr-273.

It belongs to the argininosuccinate synthase family. Type 1 subfamily. Homotetramer.

It localises to the cytoplasm. The enzyme catalyses L-citrulline + L-aspartate + ATP = 2-(N(omega)-L-arginino)succinate + AMP + diphosphate + H(+). Its pathway is amino-acid biosynthesis; L-arginine biosynthesis; L-arginine from L-ornithine and carbamoyl phosphate: step 2/3. In Buchnera aphidicola subsp. Cinara cedri (strain Cc), this protein is Argininosuccinate synthase.